The chain runs to 679 residues: DNA ligase (679 aa).

Residues 32–36, 81–82, and E115 contribute to the NAD(+) site; these read DTLYD and SL. Residue K117 is the N6-AMP-lysine intermediate of the active site. Residues R138, E175, K293, and K317 each coordinate NAD(+). 4 residues coordinate Zn(2+): C411, C414, C429, and C434. The BRCT domain maps to 601 to 679; the sequence is NSSGALLGKT…EAELQKLLST (79 aa).

It belongs to the NAD-dependent DNA ligase family. LigA subfamily. The cofactor is Mg(2+). Mn(2+) is required as a cofactor.

The catalysed reaction is NAD(+) + (deoxyribonucleotide)n-3'-hydroxyl + 5'-phospho-(deoxyribonucleotide)m = (deoxyribonucleotide)n+m + AMP + beta-nicotinamide D-nucleotide.. Its function is as follows. DNA ligase that catalyzes the formation of phosphodiester linkages between 5'-phosphoryl and 3'-hydroxyl groups in double-stranded DNA using NAD as a coenzyme and as the energy source for the reaction. It is essential for DNA replication and repair of damaged DNA. The chain is DNA ligase from Parasynechococcus marenigrum (strain WH8102).